The sequence spans 90 residues: Inner kinetochore subunit MHF1 (90 aa).

It belongs to the TAF9 family. CENP-S/MHF1 subfamily. The MHF histone-fold complex is a heterotetramer of 2 MHF1-MHF2 heterodimers. Together with MPH1/FANCM, forms the FANCM-MHF complex. Component of the inner kinetochore constitutive centromere-associated network (CCAN) (also known as central kinetochore CTF19 complex in yeast), which is composed of at least AME1, CHL4, CNN1, CTF3, CTF19, IML3, MCM16, MCM21, MCM22, MHF1, MHF2, MIF2, NKP1, NKP2, OKP1 and WIP1.

DsDNA-binding component of a FANCM-MHF complex involved in DNA damage repair and genome maintenance. FANCM-MHF promotes gene conversion at blocked replication forks, probably by reversal of the stalled fork. Component of the kinetochore, a multiprotein complex that assembles on centromeric DNA and attaches chromosomes to spindle microtubules, mediating chromosome segregation and sister chromatid segregation during meiosis and mitosis. Component of the inner kinetochore constitutive centromere-associated network (CCAN), which serves as a structural platform for outer kinetochore assembly. The polypeptide is Inner kinetochore subunit MHF1 (Saccharomyces cerevisiae (strain ATCC 204508 / S288c) (Baker's yeast)).